A 437-amino-acid polypeptide reads, in one-letter code: Glutamate-1-semialdehyde 2,1-aminomutase (437 aa).

N6-(pyridoxal phosphate)lysine is present on K273.

The protein belongs to the class-III pyridoxal-phosphate-dependent aminotransferase family. HemL subfamily. As to quaternary structure, homodimer. It depends on pyridoxal 5'-phosphate as a cofactor.

The protein resides in the cytoplasm. The enzyme catalyses (S)-4-amino-5-oxopentanoate = 5-aminolevulinate. It participates in porphyrin-containing compound metabolism; protoporphyrin-IX biosynthesis; 5-aminolevulinate from L-glutamyl-tRNA(Glu): step 2/2. The polypeptide is Glutamate-1-semialdehyde 2,1-aminomutase (Chlamydia caviae (strain ATCC VR-813 / DSM 19441 / 03DC25 / GPIC) (Chlamydophila caviae)).